The sequence spans 2233 residues: Acetyl-CoA carboxylase (2233 aa).

S2 carries the N-acetylserine modification. Residue S2 is modified to Phosphoserine. A Biotin carboxylation domain is found at 58 to 567; sequence VISKILIANN…TTGWLDDLIT (510 aa). Residues 216-408 enclose the ATP-grasp domain; that stretch reads KTGLVSVDDD…LPAAQLQIAM (193 aa). Residue 256 to 261 participates in ATP binding; sequence GGGGKG. 3 residues coordinate Mn(2+): E365, E379, and N381. R383 is an active-site residue. A Biotinyl-binding domain is found at 694–768; that stretch reads LEVENDPTQL…VAGDIMAIMT (75 aa). K735 carries the post-translational modification N6-biotinyllysine. Phosphoserine is present on residues S790, S1148, S1157, and S1162. Residues 1486 to 1822 enclose the CoA carboxyltransferase N-terminal domain; it reads PYPVKEWLQP…KRNMPVPILE (337 aa). A carboxyltransferase region spans residues 1486 to 2141; sequence PYPVKEWLQP…EEYLIKRLSH (656 aa). 1627–1629 serves as a coordination point for acetyl-CoA; it reads ARI. R1731 is a binding site for CoA. One can recognise a CoA carboxyltransferase C-terminal domain in the interval 1826–2141; it reads TWDRPVDFTP…EEYLIKRLSH (316 aa). G1998 serves as a coordination point for acetyl-CoA. CoA contacts are provided by K2034 and R2036.

Homodimer. The cofactor is biotin. Requires Mn(2+) as cofactor.

Its subcellular location is the cytoplasm. It is found in the endoplasmic reticulum membrane. It catalyses the reaction hydrogencarbonate + acetyl-CoA + ATP = malonyl-CoA + ADP + phosphate + H(+). The catalysed reaction is N(6)-biotinyl-L-lysyl-[protein] + hydrogencarbonate + ATP = N(6)-carboxybiotinyl-L-lysyl-[protein] + ADP + phosphate + H(+). It participates in lipid metabolism; malonyl-CoA biosynthesis; malonyl-CoA from acetyl-CoA: step 1/1. By phosphorylation. The catalytic activity is inhibited by soraphen A, a polyketide isolated from the myxobacterium Sorangium cellulosum and a potent inhibitor of fungal growth. Carries out three functions: biotin carboxyl carrier protein, biotin carboxylase and carboxyltransferase. Involved in the synthesis of very-long-chain fatty acid synthesis which is required to maintain a functional nuclear envelope. Required for acylation and vacuolar membrane association of VAC8 which is necessary to maintain a normal morphology of the vacuole. This Saccharomyces cerevisiae (strain ATCC 204508 / S288c) (Baker's yeast) protein is Acetyl-CoA carboxylase (ACC1).